The following is a 449-amino-acid chain: MMKTLLLFVGLLLTWESGQVLGDQTVSDNELQEMSNQGSKYVNKEIQNAVNGVKQIKTLIEKTNEERKTLLSNLEEAKKKKEDALNETRESETKLKELPGVCNETMMALWEECKPCLKQTCMKFYARVCRSGSGLVGRQLEEFLNQSSPFYFWMNGDRIDSLLENDRQQTHMLDVMQDHFSRASSIIDELFQDRFFTREPQDTYHYLPFSLPHRRPHFFFPKSRIVRSLMPFSPYEPLNFHAMFQPFLEMIHEAQQAMDIHFHSPAFQHPPTEFIREGDDDRTVCREIRHNSTGCLRMKDQCDKCREILSVDCSTNNPSQAKLRRELDESLQVAERLTRKYNELLKSYQWKMLNTSSLLEQLNEQFNWVSRLANLTQGEDQYYLRVTTVASHTSDSDVPSGVTEVVVKLFDSDPITVTVPVEVSRKNPKFMETVAEKALQEYRKKHREE.

Positions Met1–Gly22 are cleaved as a signal peptide. The short motif at Lys78–Lys81 is the Nuclear localization signal element. Residue Asn86 is glycosylated (N-linked (GlcNAc...) (complex) asparagine). Disulfide bonds link Cys102–Cys313, Cys113–Cys305, Cys116–Cys302, Cys121–Cys295, and Cys129–Cys285. Asn103 is a glycosylation site (N-linked (GlcNAc...) asparagine). Ser133 carries the phosphoserine modification. Asn145, Asn291, and Asn354 each carry an N-linked (GlcNAc...) asparagine glycan. An N-linked (GlcNAc...) (complex) asparagine glycan is attached at Asn374. Ser396 bears the Phosphoserine mark. The Nuclear localization signal motif lies at Arg443–Arg447.

The protein belongs to the clusterin family. As to quaternary structure, antiparallel disulfide-linked heterodimer of an alpha chain and a beta chain. Self-associates and forms higher oligomers. Interacts with a broad range of misfolded proteins, including APP, APOC2 and LYZ. Slightly acidic pH promotes interaction with misfolded proteins. Forms high-molecular weight oligomers upon interaction with misfolded proteins. Interacts with APOA1, LRP2, CLUAP1 and PON1. Interacts with the complement membrane attack complex. Interacts (via alpha chain) with XRCC6. Interacts with SYVN1, COMMD1, BTRC, CUL1 and with ubiquitin and SCF (SKP1-CUL1-F-box protein) E3 ubiquitin-protein ligase complexes. Interacts (via alpha chain) with BAX in stressed cells, where BAX undergoes a conformation change leading to association with the mitochondrial membrane. Does not interact with BAX in unstressed cells. Found in a complex with LTF, CLU, EPPIN and SEMG1. Interacts (immaturely glycosylated pre-secreted form) with HSPA5; this interaction promotes CLU stability and facilitates stress-induced CLU retrotranslocation from the secretory pathway to the mitochondria, thereby reducing stress-induced apoptosis by stabilizing mitochondrial membrane integrity. Interacts (isoform 4) with BCL2L1; this interaction releases and activates BAX and promotes cell death. Interacts with TGFBR2 and ACVR1. Interacts (secreted form) with STMN3; this interaction may act as an important modulator during neuronal differentiation. Interacts with VLDLR and LRP8. Post-translationally, proteolytically cleaved on its way through the secretory system, probably within the Golgi lumen. Proteolytic cleavage is not necessary for its chaperone activity. All non-secreted forms are not proteolytically cleaved. Chaperone activity of uncleaved forms is dependent on a non-reducing environment. In terms of processing, polyubiquitinated, leading to proteasomal degradation. Under cellular stress, the intracellular level of cleaved form is reduced due to proteasomal degradation. Extensively glycosylated with sulfated N-linked carbohydrates. About 30% of the protein mass is comprised of complex N-linked carbohydrate. Endoplasmic reticulum (ER) stress induces changes in glycosylation status and increases level of hypoglycosylated forms. Core carbohydrates are essential for chaperone activity. Non-secreted forms are hypoglycosylated or unglycosylated. Detected in blood plasma, cerebrospinal fluid, milk, seminal plasma and colon mucosa. Detected in the germinal center of colon lymphoid nodules and in colon parasympathetic ganglia of the Auerbach plexus (at protein level). Ubiquitous. Detected in brain, testis, ovary, liver and pancreas, and at lower levels in kidney, heart, spleen and lung.

The protein resides in the secreted. Its subcellular location is the cytoplasm. It localises to the nucleus. The protein localises to the mitochondrion membrane. It is found in the cytosol. The protein resides in the microsome. Its subcellular location is the endoplasmic reticulum. It localises to the mitochondrion. The protein localises to the perinuclear region. It is found in the cytoplasmic vesicle. The protein resides in the secretory vesicle. Its subcellular location is the chromaffin granule. Its function is as follows. Functions as extracellular chaperone that prevents aggregation of non native proteins. Prevents stress-induced aggregation of blood plasma proteins. Inhibits formation of amyloid fibrils by APP, APOC2, B2M, CALCA, CSN3, SNCA and aggregation-prone LYZ variants (in vitro). Does not require ATP. Maintains partially unfolded proteins in a state appropriate for subsequent refolding by other chaperones, such as HSPA8/HSC70. Does not refold proteins by itself. Binding to cell surface receptors triggers internalization of the chaperone-client complex and subsequent lysosomal or proteasomal degradation. Protects cells against apoptosis and against cytolysis by complement: inhibits assembly of the complement membrane attack complex (MAC) by preventing polymerization of C9 pore component of the MAC complex. Intracellular forms interact with ubiquitin and SCF (SKP1-CUL1-F-box protein) E3 ubiquitin-protein ligase complexes and promote the ubiquitination and subsequent proteasomal degradation of target proteins. Promotes proteasomal degradation of COMMD1 and IKBKB. Modulates NF-kappa-B transcriptional activity. A mitochondrial form suppresses BAX-dependent release of cytochrome c into the cytoplasm and inhibit apoptosis. Plays a role in the regulation of cell proliferation. An intracellular form suppresses stress-induced apoptosis by stabilizing mitochondrial membrane integrity through interaction with HSPA5. Secreted form does not affect caspase or BAX-mediated intrinsic apoptosis and TNF-induced NF-kappa-B-activity. Secreted form act as an important modulator during neuronal differentiation through interaction with STMN3. Plays a role in the clearance of immune complexes that arise during cell injury. Does not affect caspase or BAX-mediated intrinsic apoptosis and TNF-induced NF-kappa-B-activity. In terms of biological role, does not affect caspase or BAX-mediated intrinsic apoptosis and TNF-induced NF-kappa-B-activity. Promotes cell death through interaction with BCL2L1 that releases and activates BAX. The protein is Clusterin of Homo sapiens (Human).